Reading from the N-terminus, the 589-residue chain is Sulfite reductase [NADPH] hemoprotein beta-component (589 aa).

C443, C449, C488, and C492 together coordinate [4Fe-4S] cluster. Position 492 (C492) interacts with siroheme.

The protein belongs to the nitrite and sulfite reductase 4Fe-4S domain family. In terms of assembly, alpha(8)-beta(8). The alpha component is a flavoprotein, the beta component is a hemoprotein. It depends on siroheme as a cofactor. The cofactor is [4Fe-4S] cluster.

It catalyses the reaction hydrogen sulfide + 3 NADP(+) + 3 H2O = sulfite + 3 NADPH + 4 H(+). The protein operates within sulfur metabolism; hydrogen sulfide biosynthesis; hydrogen sulfide from sulfite (NADPH route): step 1/1. In terms of biological role, component of the sulfite reductase complex that catalyzes the 6-electron reduction of sulfite to sulfide. This is one of several activities required for the biosynthesis of L-cysteine from sulfate. The sequence is that of Sulfite reductase [NADPH] hemoprotein beta-component from Neisseria meningitidis serogroup C (strain 053442).